A 343-amino-acid chain; its full sequence is D-alanine--D-alanine ligase (343 aa).

One can recognise an ATP-grasp domain in the interval 129–335 (KYVLENFGVK…YGELISEIIE (207 aa)). ATP is bound at residue 162–217 (ENKLGYDVFIKPSNSGSSVGISKAHNREELEAGLEEALKFDRKVLVEVALNAREIE). Mg(2+) is bound by residues aspartate 288, glutamate 302, and asparagine 304.

It belongs to the D-alanine--D-alanine ligase family. Mg(2+) is required as a cofactor. It depends on Mn(2+) as a cofactor.

It localises to the cytoplasm. It catalyses the reaction 2 D-alanine + ATP = D-alanyl-D-alanine + ADP + phosphate + H(+). It participates in cell wall biogenesis; peptidoglycan biosynthesis. Its function is as follows. Cell wall formation. This Clostridium novyi (strain NT) protein is D-alanine--D-alanine ligase.